A 129-amino-acid polypeptide reads, in one-letter code: Omega-scoloptoxin(05)-Ssm1a (129 aa).

Residues 1-24 (MPSLCIIALFGTLTFYTLIPSIHT) form the signal peptide. A propeptide spanning residues 25–46 (LKCVRCDGPMSNYDCKTTYPAA) is cleaved from the precursor.

Belongs to the scoloptoxin-05 family. In terms of processing, contains 3 disulfide bonds. As to expression, expressed by the venom gland.

It is found in the secreted. Toxin that increase voltage-gated calcium channel (Cav) currents in DRG neurons by 70% and 120%, when 1 uM and 10 uM are tested, respectively. The sequence is that of Omega-scoloptoxin(05)-Ssm1a from Scolopendra mutilans (Chinese red-headed centipede).